The chain runs to 581 residues: Multidrug and toxin extrusion protein 2 (581 aa).

At 1–33 (MDSLQDTVPLDHGGCCPALSRLVPRGFGTEMWT) the chain is on the cytoplasmic side. A helical transmembrane segment spans residues 34–54 (LFALSGPLFLFQVLTFMIYIV). Topologically, residues 55–66 (STVFCGHLGKVE) are extracellular. The helical transmembrane segment at 67–87 (LASVTLAVAFVNVCGVSVGVG) threads the bilayer. The Cytoplasmic segment spans residues 88–119 (LSSACDTLMSQSFGSPNKKHVGVILQRGALVL). The helical transmembrane segment at 120-140 (LLCCLPCWALFLNTQHILLLF) threads the bilayer. Residues 141–153 (RQDPEVSRLTQDY) are Extracellular-facing. The helical transmembrane segment at 154–174 (VMIFIPGLPVIFLYNLLAKYL) threads the bilayer. Topologically, residues 175-183 (QNQKITWPQ) are cytoplasmic. The chain crosses the membrane as a helical span at residues 184–204 (VLSGVVGNCVNGVANYALVSV). Topologically, residues 205–212 (LNLGVRGS) are extracellular. The helical transmembrane segment at 213-233 (AYANIISQFAQTVFLLLYIVL) threads the bilayer. Topologically, residues 234–253 (KKLHLETWAGWSSQCLQDWG) are cytoplasmic. The helical transmembrane segment at 254-273 (PFFSLAVPSMLMICVEWWAY) threads the bilayer. Over 274–317 (EIGSFLMGLLSVVDLSAQAVIYEVATVTYMRHSHHLAYTAHVAR) the chain is Extracellular. The chain crosses the membrane as a helical span at residues 318–338 (IPLGLSIGVCVRVGMALGAAD). Over 339-346 (TVQAKRSA) the chain is Cytoplasmic. The helical transmembrane segment at 347–367 (VSGVLSIVGISLVLGTLISIL) threads the bilayer. The Extracellular segment spans residues 368-380 (KNQLGHIFTNDED). The chain crosses the membrane as a helical span at residues 381 to 401 (VIALVSQVLPVYSVFHVFEAI). Residues 402–420 (CCVYGGVLRGTGKQAFGAA) lie on the Cytoplasmic side of the membrane. The chain crosses the membrane as a helical span at residues 421–441 (VNAITYYIIGLPLGILLTFVV). Residues 442–444 (RMR) are Extracellular-facing. A helical transmembrane segment spans residues 445-465 (IMGLWLGMLACVFLATAAFVA). Residues 466–557 (YTARLDWKLA…LSVKQLVIRR (92 aa)) are Cytoplasmic-facing. The disordered stretch occupies residues 481 to 513 (KHSGQQQQQQRAESTATRSGPEKAVLSSVATGS). A helical membrane pass occupies residues 558–578 (GAALGAASATLMVGLTVRILA). Residues 579 to 581 (TRH) lie on the Extracellular side of the membrane.

It belongs to the multi antimicrobial extrusion (MATE) (TC 2.A.66.1) family.

Its subcellular location is the cell membrane. It localises to the apical cell membrane. It carries out the reaction thiamine(out) + H(+)(in) = thiamine(in) + H(+)(out). It catalyses the reaction estrone 3-sulfate(in) + H(+)(out) = estrone 3-sulfate(out) + H(+)(in). The catalysed reaction is creatinine(in) + H(+)(out) = creatinine(out) + H(+)(in). In terms of biological role, multidrug efflux pump that functions as a H(+)/organic cation antiporter. Mediates the efflux of cationic compounds, such as the model cations, tetraethylammonium (TEA) and 1-methyl-4-phenylpyridinium (MPP+), the platinum-based drug oxaliplatin or weak bases that are positively charged at physiological pH, cimetidine or the antidiabetic drug metformin. Mediates the efflux of the endogenous compounds creatinine, thiamine and estrone-3-sulfate. Plays a physiological role in the excretion of drugs, toxins and endogenous metabolites through the kidney. This is Multidrug and toxin extrusion protein 2 (SLC47A2) from Pongo abelii (Sumatran orangutan).